The primary structure comprises 491 residues: Ketol-acid reductoisomerase (NADP(+)) (491 aa).

In terms of domain architecture, KARI N-terminal Rossmann spans Ala15–Ser208. NADP(+) is bound by residues Cys45 to Gln48, Arg68, Arg76, Ser78, and Asp108 to Gln110. The active site involves His132. Gly158 lines the NADP(+) pocket. KARI C-terminal knotted domains follow at residues Ser209 to Gln344 and Tyr345 to Met484. Mg(2+) is bound by residues Asp217, Glu221, Glu389, and Glu393. Position 414 (Ser414) interacts with substrate.

The protein belongs to the ketol-acid reductoisomerase family. Requires Mg(2+) as cofactor.

It catalyses the reaction (2R)-2,3-dihydroxy-3-methylbutanoate + NADP(+) = (2S)-2-acetolactate + NADPH + H(+). It carries out the reaction (2R,3R)-2,3-dihydroxy-3-methylpentanoate + NADP(+) = (S)-2-ethyl-2-hydroxy-3-oxobutanoate + NADPH + H(+). The protein operates within amino-acid biosynthesis; L-isoleucine biosynthesis; L-isoleucine from 2-oxobutanoate: step 2/4. It participates in amino-acid biosynthesis; L-valine biosynthesis; L-valine from pyruvate: step 2/4. Functionally, involved in the biosynthesis of branched-chain amino acids (BCAA). Catalyzes an alkyl-migration followed by a ketol-acid reduction of (S)-2-acetolactate (S2AL) to yield (R)-2,3-dihydroxy-isovalerate. In the isomerase reaction, S2AL is rearranged via a Mg-dependent methyl migration to produce 3-hydroxy-3-methyl-2-ketobutyrate (HMKB). In the reductase reaction, this 2-ketoacid undergoes a metal-dependent reduction by NADPH to yield (R)-2,3-dihydroxy-isovalerate. This chain is Ketol-acid reductoisomerase (NADP(+)), found in Citrobacter koseri (strain ATCC BAA-895 / CDC 4225-83 / SGSC4696).